The sequence spans 132 residues: Small ribosomal subunit protein uS8 (132 aa).

It belongs to the universal ribosomal protein uS8 family. As to quaternary structure, part of the 30S ribosomal subunit. Contacts proteins S5 and S12.

One of the primary rRNA binding proteins, it binds directly to 16S rRNA central domain where it helps coordinate assembly of the platform of the 30S subunit. The polypeptide is Small ribosomal subunit protein uS8 (Flavobacterium johnsoniae (strain ATCC 17061 / DSM 2064 / JCM 8514 / BCRC 14874 / CCUG 350202 / NBRC 14942 / NCIMB 11054 / UW101) (Cytophaga johnsonae)).